The sequence spans 720 residues: MAAQCCCRKAPGAEAAPARPPPEPPPALDVASASSAQLFRLRHLQLGLELRPEARELAGCLVLELCALRPAPRALVLDAHPALRLHSVSFRRASAVSESPCTFAFPAPGSGPPLPGFADAPGAESASCPLAFRLDPFTDYGSSLTVTLPPEVQAHQPFQVILRYTSTDAPAIWWLDPELTYGNAKPFVFTQGHSVCNRSFFPCFDTPAVKCTYSAVVKAPLGVQVLMSATQSVYVEEEGLYHFHMEHPVPAYLVALVAGDLKPADIGPRSRVWAEPCLLPTATSKLSGAVEQWLSAAERLYGPYMWGRYDIVFLPPSFPIVAMENPCLTFIISSILESDEFLVIDVIHEVAHSWFGNAVTNATWEEMWLSEGLATYAQRRITTETYGAAFTCLETAFRLDALHRQMRLLGEDSPVSKLQVKLEPGVNPSHLMNLFTYEKGYCFVYYLSQLCGGPQRFDDFLRAYVEKYKFTSVVAQDLLDSFLSFFPELKEQSVDCRAGLEFERWLNATGPPLAEPDLSQGSSLTRPVEALFQLWTAEPLEQAAASASAIDISKWRTFQTALFLDRLLDGSPLPQEVVMSLSKCYSSLLDSMNAEIRIRWLQIVVRNDYYPDLHRVRRFLESQMSRMYTIPLYEDLCTGALKSFALEVFYQTQGRLHPNLRRTIQQILSQGLGPSAEPSTEPSTDLGGAEADTNPDSPALLLGDEAPSSTISLRDVNVSA.

321–325 (VAMEN) provides a ligand contact to substrate. A Zn(2+)-binding site is contributed by His-348. Glu-349 (proton acceptor) is an active-site residue. The Zn(2+) site is built by His-352 and Glu-371. The tract at residues 671–708 (GLGPSAEPSTEPSTDLGGAEADTNPDSPALLLGDEAPS) is disordered.

Belongs to the peptidase M1 family. Zn(2+) is required as a cofactor.

It carries out the reaction Release of N-terminal amino acids, preferentially methionine, from peptides and arylamides.. Broad specificity aminopeptidase which preferentially hydrolyzes an N-terminal methionine, citrulline or glutamine. This Mus musculus (Mouse) protein is Aminopeptidase RNPEPL1.